The primary structure comprises 420 residues: Phosphoribosylamine--glycine ligase (420 aa).

Residues 108-314 enclose the ATP-grasp domain; it reads KEIMVKYGVP…FAQNITDILD (207 aa). Residue 134–195 coordinates ATP; that stretch reads IEKHGAPIVV…EEFLEGEEFS (62 aa). 2 residues coordinate Mg(2+): Glu284 and Asn286.

It belongs to the GARS family. Mg(2+) serves as cofactor. Requires Mn(2+) as cofactor.

It carries out the reaction 5-phospho-beta-D-ribosylamine + glycine + ATP = N(1)-(5-phospho-beta-D-ribosyl)glycinamide + ADP + phosphate + H(+). It functions in the pathway purine metabolism; IMP biosynthesis via de novo pathway; N(1)-(5-phospho-D-ribosyl)glycinamide from 5-phospho-alpha-D-ribose 1-diphosphate: step 2/2. The polypeptide is Phosphoribosylamine--glycine ligase (Streptococcus pneumoniae serotype 4 (strain ATCC BAA-334 / TIGR4)).